The following is an 87-amino-acid chain: Small ribosomal subunit protein bS20 (87 aa).

The interval 1-22 (MANSAQARKRARQAVKQRAHNA) is disordered. Over residues 7–19 (ARKRARQAVKQRA) the composition is skewed to basic residues.

This sequence belongs to the bacterial ribosomal protein bS20 family.

Binds directly to 16S ribosomal RNA. The polypeptide is Small ribosomal subunit protein bS20 (Methylobacillus flagellatus (strain ATCC 51484 / DSM 6875 / VKM B-1610 / KT)).